We begin with the raw amino-acid sequence, 358 residues long: Hydroxyproline O-arabinosyltransferase 2 (358 aa).

Residues 7 to 26 form a helical; Signal-anchor membrane-spanning segment; that stretch reads YFFPILMTLSLFLIIRYNYI.

In terms of tissue distribution, ubiquitous.

It is found in the golgi apparatus. The protein resides in the cis-Golgi network membrane. It catalyses the reaction trans-4-hydroxy-L-prolyl-[protein] + UDP-beta-L-arabinofuranose = O-(beta-L-arabinofuranosyl)-trans-4-hydroxy-L-prolyl-[protein] + UDP + H(+). In terms of biological role, glycosyltransferase involved in the O-arabinosylation of several proteins including extensins and small signaling peptides. Catalyzes the transfer of the initial L-arabinose to the hydroxyl group of Hyp residues. Contributes redundantly with HPAT1 and HPAT3 to arabinosylation of EXT3. The protein is Hydroxyproline O-arabinosyltransferase 2 of Arabidopsis thaliana (Mouse-ear cress).